Consider the following 2377-residue polypeptide: DNA (cytosine-5-)-methyltransferase DMT5 (2377 aa).

The disordered stretch occupies residues 24–56 (GTADGAVNGGNIPNSQSQKRKRASPSPEIESEE). In terms of domain architecture, Chromo; shadow subtype spans 62–126 (YEIDYIADSR…KNPGKPRLSP (65 aa)). A disordered region spans residues 150–282 (GKSRAASSTD…KSSLPKAKLR (133 aa)). Residues 201–213 (PTSKKVHPNKKCK) are compositionally biased toward basic residues. Acidic residues-rich tracts occupy residues 217 to 238 (DDESDFVFEEGEWDEDEDDDND) and 245 to 263 (EDDEDDEQERSAEEPESDE). Residues 268–282 (PAKKTKSSLPKAKLR) are compositionally biased toward basic residues. The region spanning 347-753 (LRVATMCSGT…IAALKVACHK (407 aa)) is the SAM-dependent MTase C5-type domain. Residue C440 is part of the active site. The Helicase ATP-binding domain occupies 1450–1771 (AERPVMVRGG…RSIATFMGIH (322 aa)). Residue 1463–1470 (DQVGYGKT) participates in ATP binding. Disordered stretches follow at residues 1642-1680 (KGQAYRDKHDSDSKAKPITKEELERWEASEDEDDDENSK), 2313-2334 (KGRGSSISMTNEKRTPTLTVKS), and 2347-2377 (SSFRSKKRSMEARDAEGVSDDDENSELSDII). Residues 1645–1669 (AYRDKHDSDSKAKPITKEELERWEA) are compositionally biased toward basic and acidic residues. The 164-residue stretch at 2152 to 2315 (KLEHLVNLIH…EIPQEEYKGR (164 aa)) folds into the Helicase C-terminal domain. Positions 2317 to 2334 (SSISMTNEKRTPTLTVKS) are enriched in polar residues. Positions 2363 to 2377 (GVSDDDENSELSDII) are enriched in acidic residues.

This sequence in the N-terminal section; belongs to the class I-like SAM-binding methyltransferase superfamily. C5-methyltransferase family. In the C-terminal section; belongs to the SNF2/RAD54 helicase family. In terms of assembly, interacts with SWI6. Mg(2+) serves as cofactor.

The protein localises to the nucleus. It is found in the chromosome. It carries out the reaction a 2'-deoxycytidine in DNA + S-adenosyl-L-methionine + ATP + H2O = a 5-methyl-2'-deoxycytidine in DNA + S-adenosyl-L-homocysteine + ADP + phosphate + 2 H(+). Hemimethylated DNA substrates stimulate ATP hydrolysis and this is a prerequisite for methyltransferase activity. Functionally, ATP-dependent cytosine methylase that maintains DNA methylation by acting at hemimethylated palindromic 5'-CG-3' sites to produce symmetrically methylated DNA strands. DNA methylation may play a role in transcriptional silencing, particularly at transposable elements. This Cryptococcus neoformans var. grubii serotype A (strain H99 / ATCC 208821 / CBS 10515 / FGSC 9487) (Filobasidiella neoformans var. grubii) protein is DNA (cytosine-5-)-methyltransferase DMT5.